The chain runs to 134 residues: MGKDTIADIITSIRNADMNRKGTVRIGSTNITESIVKILLREGFIENVRKHRESNQYFLILTLRHRRNKKESYKTILNLKRISRPGLRIYSNSQRIPRILGGIGIVILSTSQGIMTDREARLKRIGGEILCYIW.

This sequence belongs to the universal ribosomal protein uS8 family. As to quaternary structure, part of the 30S ribosomal subunit.

The protein localises to the plastid. It is found in the chloroplast. Functionally, one of the primary rRNA binding proteins, it binds directly to 16S rRNA central domain where it helps coordinate assembly of the platform of the 30S subunit. This Capsella bursa-pastoris (Shepherd's purse) protein is Small ribosomal subunit protein uS8c (rps8).